A 269-amino-acid chain; its full sequence is Indole-3-glycerol phosphate synthase (269 aa).

This sequence belongs to the TrpC family.

It carries out the reaction 1-(2-carboxyphenylamino)-1-deoxy-D-ribulose 5-phosphate + H(+) = (1S,2R)-1-C-(indol-3-yl)glycerol 3-phosphate + CO2 + H2O. It participates in amino-acid biosynthesis; L-tryptophan biosynthesis; L-tryptophan from chorismate: step 4/5. This is Indole-3-glycerol phosphate synthase from Streptomyces griseus subsp. griseus (strain JCM 4626 / CBS 651.72 / NBRC 13350 / KCC S-0626 / ISP 5235).